We begin with the raw amino-acid sequence, 715 residues long: Protein DOA1 (715 aa).

7 WD repeats span residues 11–40, 53–82, 97–125, 135–166, 177–206, 218–247, and 259–288; these read GHDQ…RLWS, GQGF…NGVP, GHQG…KVWK, AHNA…KLWQ, IHND…KLVD, GHES…RIWS, and LPAI…RIFS. A Phosphoserine modification is found at serine 332. The PFU domain occupies 352 to 449; it reads AHQFSNSSWK…NGISLDQPND (98 aa). The interval 434-440 is interaction with HSE1; the sequence is FILKNTN. Positions 465-715 constitute a PUL domain; it reads KVLPVKQYLI…RFKDIFDDLS (251 aa). 6 ARM repeats span residues 478–512, 513–543, 544–582, 583–635, 636–680, and 681–715; these read YNPD…LHDI, DESW…VRLI, VKKL…CFNN, ENWG…LVTK, GNSD…LATV, and EPTL…DDLS.

The protein belongs to the WD repeat PLAP family. In terms of assembly, forms a complex composed of CDC48, NPL4, UFD1, DOA1, SHP1 and deubiquitinase OTU1; within the complex interacts with CDC48. Interacts (via PUL domain) with CDC48 (via C-terminus); the interaction is direct. Forms a complex composed of CDC48, DOA1, deubiquitinase UBP3 and probably BRE5; within the complex interacts with CDC48 and UBP3. May form a complex composed of VPS27, HSE1 and DOA1. Interacts with HSE1 (via SH3 domain). Interacts (via WD repeats and PFU domain) with ubiquitin; the interaction is direct. Interacts with ubiquitinated FZO1 but not unmodified FZO1; the interaction recruits FZO1 to CDC48 and promotes FZO1 proteasomal degradation.

It localises to the nucleus. The protein localises to the cytoplasm. Its subcellular location is the mitochondrion outer membrane. It is found in the endosome membrane. Its function is as follows. Ubiquitin-binding protein involved in protein ubiquitination, sorting and degradation. Acts as a ubiquitinated substrate-recruiting adapter for chaperone ATPase CDC48 by binding mono- or polyubiquitin chains. Depending on the context, promotes or prevents proteasomal degradation of ubiquitinated proteins. Involved in the ubiquitin fusion degradation (UFD) pathway by promoting the degradation of ubiquitinated proteins. Involved in the mitochondria-associated degradation pathway (MAD) by promoting the degradation of several ubiquitinated membrane proteins. By competing with UFD2 to bind CDC48, prevents the multi-ubiquitination and subsequent degradation of UFD2-dependent substrates. Required for ribophagy, a process which relocalizes ribosomal particles into the vacuole for degradation in response to starvation. Involved in the ubiquitin-mediated sorting of membrane proteins into multivesicular bodies (MVBs). In addition, plays an essential role in maintaining cellular ubiquitin levels. May affect indirectly the degradation of ubiquitinylated proteins by regulating cellular ubiquitin levels. The polypeptide is Protein DOA1 (Saccharomyces cerevisiae (strain ATCC 204508 / S288c) (Baker's yeast)).